The following is an 809-amino-acid chain: MAAPAVTELEDQEMREAQREYLDFLDDEEDQGIYQSKVRDMISENQYRLIVNVNDLRKKNEKRANMLMNNAFEGLIAFQRALKDFVASIDGTYAKQYEEFYIGLEGSFGNKHVTPRTLTSRCLSCIVCVEGIVTKCSLVRPKVVRSVHYCPATKKTIERKYTDLTSLEAFPSSAVYPTKDEENNPLETEYGLSIYKDHQTITIQEMPEKAPAGQLPRSVDIILDDDLVDKVKPGDRVQVIGTYRCLPSKQNGYTSASFRTILIACNVIQMSKEVTPVFSADDLAKIKKFSKSHSKDIFEQLSRSLAPSIHGHLYIKKAILCMLLGGVEKVLDNGTRIRGDINVLLIGDPSVAKSQLLRYVLCTAPRAIPTTGRGSSGVGLTAAVTTDQETGERRLEAGAMVLADRGVVCIDEFDKMSDMDRTAIHEVMEQGRVTIAKAGIHARLNARCSVLAAANPVYGRYDQYKTPMDNIGLQDSLLSRFDLLFIMLDQMDPEQDREISDHVLRMHRYRAAGEQDGDAMPLGSAVDILATNDPNVTSEEQQELQVYEKHDSLLHGVKKRKEKILSVEFMRKYVHVAKIFKPVLTQEAASFIAEEYSRLRNQDQLSTDVARTSPVTARTLETLIRLSTAHAKVRMSKTVQLQDAEAAIELVQYAYFKKVLEKEKKRRRRDEDSDTEGEQQTQPDGEAKKRRKKRRAQEGESHDPYEFSDTEDETPVVHTPKTPVNGQEEMETDSSAKPGLSGERLKAFKSALLGAFKSAHAQSIAMEALMEAINKRNDSPFSQAEVKAALELMEEANHIMVSDNIVFLI.

An MCM domain is found at 297–504 (IFEQLSRSLA…QDREISDHVL (208 aa)). 347-354 (GDPSVAKS) contacts ATP. The Arginine finger motif lies at 479 to 482 (SRFD). Positions 664 to 741 (KKRRRRDEDS…TDSSAKPGLS (78 aa)) are disordered. Basic and acidic residues predominate over residues 696–705 (AQEGESHDPY).

Belongs to the MCM family. Component of the mcm2-7 complex (RLF-M). The complex forms a toroidal hexameric ring with the proposed subunit order mcm2-mcm6-mcm4-mcm7-mcm3-mcm5. Component of the CMG helicase complex, composed of the mcm2-7 complex, the GINS complex and cdc45.

The protein resides in the nucleus. It is found in the chromosome. It catalyses the reaction ATP + H2O = ADP + phosphate + H(+). Functionally, acts as a component of the MCM2-7 complex (MCM complex) which is the putative replicative helicase essential for 'once per cell cycle' DNA replication initiation and elongation in eukaryotic cells. The active ATPase sites in the MCM2-7 ring are formed through the interaction surfaces of two neighboring subunits such that a critical structure of a conserved arginine finger motif is provided in trans relative to the ATP-binding site of the Walker A box of the adjacent subunit. The six ATPase active sites, however, are likely to contribute differentially to the complex helicase activity. The existence of maternal and zygotic forms of mcm3 and mcm6 suggests that specific forms of mcm2-7 complexes may be used during different stages of development. The sequence is that of Zygotic DNA replication licensing factor mcm3 (zmcm3) from Xenopus tropicalis (Western clawed frog).